The sequence spans 150 residues: Detocs response regulatory protein DtcB (150 aa).

The region spanning 2–150 (KILIADDNIQ…TDLIKKITEL (149 aa)) is the Response regulatory domain. 4-aspartylphosphate is present on aspartate 54.

Probably phosphorylated by DtcA.

Functionally, possible phosphate scavenger member of the two-component regulatory system Detocs that confers resistance to bacteriophage. When the system (DtcA-DtcB-DtcC) is expressed in a susceptible E.coli (strain MG1655) it confers resistance to bacteriophages T2, T4, T5, T7, SECphi4, SECphi6 and SECphi27; the level of resistance varies, resistance to T2, T7 and SECphi4 is not very high. DtcA probably autophosphorylates upon sensing viral infection, and subsequently transfers the phosphate signal to DtcC which activates it, leading to an antiviral defense; DtcB (this subunit) may scavenge phosphorylation signals from accidental activation of DtcA. This chain is Detocs response regulatory protein DtcB, found in Enterobacter cloacae (strain JD6301).